Consider the following 218-residue polypeptide: Insulin-induced gene 2 protein (218 aa).

At 1-21 (MGDRENVSYGSRPILAQKMNL) the chain is on the cytoplasmic side. Residues 22-44 (LLRGFLLFLIGVFLALVLNLLQV) traverse the membrane as a helical segment. Topologically, residues 45 to 63 (QRNVTLFPPDVLSSLFSSA) are lumenal. A helical membrane pass occupies residues 64–81 (WWVPLCCGTAAAAIGLLY). The Cytoplasmic portion of the chain corresponds to 82–96 (PCIDRHLGEPHKFKR). The helical transmembrane segment at 97-119 (EWSSVMRCVAVFVGINHASAKVD) threads the bilayer. At 120–122 (FAN) the chain is on the lumenal side. A helical transmembrane segment spans residues 123 to 141 (NMQLSLTLAALSIGLWWTF). Topologically, residues 142–146 (DRSRS) are cytoplasmic. A helical membrane pass occupies residues 147–168 (GLGLGIGISFFATLVSQLLVYN). Residues 169-182 (GVYEYTAPDFLYVR) are Lumenal-facing. A helical membrane pass occupies residues 183–200 (SWLPCIFFAGGITMGNIG). Over 201 to 218 (RQLEMYERKALVEKSHRD) the chain is Cytoplasmic. A KxHxx motif is present at residues 212 to 218 (VEKSHRD).

Belongs to the INSIG family. As to quaternary structure, interacts with scap; interaction is direct and only takes place in the presence of sterols; it prevents interaction between scap and the coat protein complex II (COPII). Associates with the SCAP-SREBP complex; association is mediated via its interaction with scap and only takes place in the presence of sterols.

The protein localises to the endoplasmic reticulum membrane. Oxysterol-binding protein that mediates feedback control of cholesterol synthesis by controlling both endoplasmic reticulum to Golgi transport of scap and degradation of hmgcr. Acts as a negative regulator of cholesterol biosynthesis by mediating the retention of the SCAP-SREBP complex in the endoplasmic reticulum, thereby blocking the processing of sterol regulatory element-binding proteins (SREBPs). Binds oxysterol, including 22-hydroxycholesterol, 24-hydroxycholesterol, 25-hydroxycholesterol and 27-hydroxycholesterol, regulating interaction with scap and retention of the SCAP-SREBP complex in the endoplasmic reticulum. In presence of oxysterol, interacts with scap, retaining the SCAP-SREBP complex in the endoplasmic reticulum, thereby preventing scap from escorting SREBPs to the Golgi. Sterol deprivation reduce oxysterol-binding, disrupting the interaction between insig2 and scap, thereby promoting Golgi transport of the SCAP-SREBP complex, followed by processing and nuclear translocation of SREBPs. Also regulates cholesterol synthesis by regulating degradation of hmgcr. The sequence is that of Insulin-induced gene 2 protein from Xenopus laevis (African clawed frog).